We begin with the raw amino-acid sequence, 20 residues long: MRLTQGAFSYLPDLTDAQII.

It belongs to the RuBisCO small chain family. In terms of assembly, heterohexadecamer of 8 large and 8 small subunits.

The protein resides in the plastid. It localises to the chloroplast. In terms of biological role, ruBisCO catalyzes two reactions: the carboxylation of D-ribulose 1,5-bisphosphate, the primary event in carbon dioxide fixation, as well as the oxidative fragmentation of the pentose substrate in the photorespiration process. Both reactions occur simultaneously and in competition at the same active site. Although the small subunit is not catalytic it is essential for maximal activity. This Chattonella marina var. antiqua (Red tide flagellate) protein is Ribulose bisphosphate carboxylase small subunit.